A 483-amino-acid chain; its full sequence is MRQPPGESDMAVSDALLPSFSTFASGPAGREKTLRPAGAPTNRWREELSHMKRLPPLPGRPYDLAATVATDLESGGAGAACSSNNPALLARRETEEFNDLLDLDFILSNSLTHQESVAATVTTSASASSSSSPASSGPASAPSTCSFSYPIRAGGDPGVAASNTGGGLLYSRESAPPPTAPFNLADINDVSPSGGFVAELLRPELDPVYIPPQQPQPPGGGLMGKFVLKASLTTPGSEYSSPSVISVSKGSPDGSHPVVVAPYSGGPPRMCPKIKQEAVPSCTVSRSLEAHLSAGPQLSNGHRPNTHDFPLGRQLPTRTTPTLSPEELLNSRDCHPGLPLPPGFHPHPGPNYPPFLPDQMQSQVPSLHYQELMPPGSCLPEEPKPKRGRRSWPRKRTATHTCDYAGCGKTYTKSSHLKAHLRTHTGEKPYHCDWDGCGWKFARSDELTRHYRKHTGHRPFQCQKCDRAFSRSDHLALHMKRHF.

Positions 22-42 (TFASGPAGREKTLRPAGAPTN) are disordered. A Glycyl lysine isopeptide (Lys-Gly) (interchain with G-Cter in ubiquitin) cross-link involves residue Lys32. The short motif at 99-107 (DLLDLDFIL) is the 9aaTAD element. The residue at position 251 (Ser251) is a Phosphoserine. Residues 294–395 (AGPQLSNGHR…KRGRRSWPRK (102 aa)) form a disordered region. Pro residues predominate over residues 338-356 (LPLPPGFHPHPGPNYPPFL). Glu381 is modified (5-glutamyl polyglutamate). Residues 386–395 (KRGRRSWPRK) show a composition bias toward basic residues. Positions 386 to 483 (KRGRRSWPRK…HLALHMKRHF (98 aa)) are interaction with ZNF296. 3 C2H2-type zinc fingers span residues 400–424 (HTCDYAGCGKTYTKSSHLKAHLRTH), 430–454 (YHCDWDGCGWKFARSDELTRHYRKH), and 460–482 (FQCQKCDRAFSRSDHLALHMKRH). The interval 443 to 474 (RSDELTRHYRKHTGHRPFQCQKCDRAFSRSDH) is interaction with target DNA.

It belongs to the krueppel C2H2-type zinc-finger protein family. In terms of assembly, interacts with MUC1 (via the C-terminal domain). Interacts with POU5F1/OCT4 and SOX2. Interacts with MEIS2 isoform MeisD and PBX1 isoform PBX1a. Interacts with ZNF296. Interacts with GLIS1. Interacts with BTRC; this interaction leads to KLF4 ubiquitination and subsequent degradation. Interacts with IPO7; the interaction facilitates nuclear translocation of KLF4 in dental papilla cells. In terms of processing, ubiquitinated. 'Lys-48'-linked ubiquitinated and targeted for proteasomal degradation by the SCF(BTRC) E3 ubiquitin-protein ligase complex, thereby negatively regulating cell pluripotency maintenance and embryogenesis. Post-translationally, polyglutamylated by TTLL1 and TTLL4 at Glu-381, which inhibits KLF4 binding with E3 ligase component BTRC, thereby impeding ubiquitination. Deglutamylated by CCP1 and CCP6; deglutamylation promotes KLF4 ubiquitination. KLF4 glutamylation state plays a critical role in the regulation of its function in cell reprogramming, pluripotency maintenance and embryogenesis. In terms of tissue distribution, highest expression in the colon. Lower levels in testis, lung and small intestine.

It is found in the nucleus. The protein resides in the cytoplasm. In terms of biological role, transcription factor; can act both as activator and as repressor. Binds the 5'-CACCC-3' core sequence. Binds to the promoter region of its own gene and can activate its own transcription. Regulates the expression of key transcription factors during embryonic development. Plays an important role in maintaining embryonic stem cells, and in preventing their differentiation. Required for establishing the barrier function of the skin and for postnatal maturation and maintenance of the ocular surface. Involved in the differentiation of epithelial cells and may also function in skeletal and kidney development. Contributes to the down-regulation of p53/TP53 transcription. In Mus musculus (Mouse), this protein is Krueppel-like factor 4 (Klf4).